Consider the following 320-residue polypeptide: Dermonecrotic toxin LarSicTox-alphaIB2a (320 aa).

The N-terminal stretch at 1-15 (MSHSSTALLHPYVAA) is a signal peptide. A propeptide spanning residues 16-41 (RATEKFAPIYFFCHPLQSAETDVAER) is cleaved from the precursor. The active site involves His52. Mg(2+) is bound by residues Glu72 and Asp74. Residue His88 is the Nucleophile of the active site. 2 disulfide bridges follow: Cys92–Cys98 and Cys94–Cys237. Residue Asp132 coordinates Mg(2+). Residue Asn297 is glycosylated (N-linked (GlcNAc...) asparagine).

The protein belongs to the arthropod phospholipase D family. Class II subfamily. Requires Mg(2+) as cofactor. In terms of tissue distribution, expressed by the venom gland.

The protein localises to the secreted. The catalysed reaction is an N-(acyl)-sphingosylphosphocholine = an N-(acyl)-sphingosyl-1,3-cyclic phosphate + choline. It carries out the reaction an N-(acyl)-sphingosylphosphoethanolamine = an N-(acyl)-sphingosyl-1,3-cyclic phosphate + ethanolamine. It catalyses the reaction a 1-acyl-sn-glycero-3-phosphocholine = a 1-acyl-sn-glycero-2,3-cyclic phosphate + choline. The enzyme catalyses a 1-acyl-sn-glycero-3-phosphoethanolamine = a 1-acyl-sn-glycero-2,3-cyclic phosphate + ethanolamine. Dermonecrotic toxins cleave the phosphodiester linkage between the phosphate and headgroup of certain phospholipids (sphingolipid and lysolipid substrates), forming an alcohol (often choline) and a cyclic phosphate. This toxin acts on sphingomyelin (SM). It may also act on ceramide phosphoethanolamine (CPE), lysophosphatidylcholine (LPC) and lysophosphatidylethanolamine (LPE), but not on lysophosphatidylserine (LPS), and lysophosphatidylglycerol (LPG). It acts by transphosphatidylation, releasing exclusively cyclic phosphate products as second products. Induces dermonecrosis, hemolysis, increased vascular permeability, edema, inflammatory response, and platelet aggregation. This Loxosceles arizonica (Arizona brown spider) protein is Dermonecrotic toxin LarSicTox-alphaIB2a.